The following is a 259-amino-acid chain: DNA repair protein RecO (259 aa).

It belongs to the RecO family.

Its function is as follows. Involved in DNA repair and RecF pathway recombination. The polypeptide is DNA repair protein RecO (Leuconostoc mesenteroides subsp. mesenteroides (strain ATCC 8293 / DSM 20343 / BCRC 11652 / CCM 1803 / JCM 6124 / NCDO 523 / NBRC 100496 / NCIMB 8023 / NCTC 12954 / NRRL B-1118 / 37Y)).